The following is a 410-amino-acid chain: Neurotensin receptor type 2 (410 aa).

Topologically, residues 1-32 are extracellular; it reads METSSPRPPRPSSNPGLSLDARLGVDTRLWAK. Residues 33 to 55 form a helical membrane-spanning segment; it reads VLFTALYALIWALGAAGNALSAH. Residues 56–64 are Cytoplasmic-facing; the sequence is VVLKARAGR. A helical membrane pass occupies residues 65 to 87; it reads AGRLRHHVLSLALAGLLLLLVGV. The Extracellular portion of the chain corresponds to 88–109; that stretch reads PVELYSFVWFHYPWVFGDLGCR. A disulfide bond links Cys-108 and Cys-194. Residues 110–131 form a helical membrane-spanning segment; it reads GYYFVHELCAYATVLSVAGLSA. The Cytoplasmic portion of the chain corresponds to 132–154; the sequence is ERCLAVCQPLRARSLLTPRRTRW. Residues 155 to 176 traverse the membrane as a helical segment; sequence LVALSWAASLGLALPMAVIMGQ. Residues 177 to 217 lie on the Extracellular side of the membrane; sequence KHELETADGEPEPASRVCTVLVSRTALQVFIQVNVLVSFVL. A helical transmembrane segment spans residues 218–237; the sequence is PLALTAFLNGVTVSHLLALC. Residues 238-297 lie on the Cytoplasmic side of the membrane; that stretch reads SQVPSTSTPGSSTPSRLELLSEEGLLSFIVWKKTFIQGGQVSLVRHKDVRRIRSLQRSVQ. The chain crosses the membrane as a helical span at residues 298–318; it reads VLRAIVVMYVICWLPYHARRL. Residues 319–337 are Extracellular-facing; it reads MYCYVPDDAWTDPLYNFYH. A helical transmembrane segment spans residues 338–358; sequence YFYMVTNTLFYVSSAVTPLLY. The Cytoplasmic segment spans residues 359–410; it reads NAVSSSFRKLFLEAVSSLCGEHHPMKRLPPKPQSPTLMDTASGFGDPPETRT. A lipid anchor (S-palmitoyl cysteine) is attached at Cys-377. Positions 381 to 410 are disordered; sequence HPMKRLPPKPQSPTLMDTASGFGDPPETRT.

The protein belongs to the G-protein coupled receptor 1 family. Neurotensin receptor subfamily. NTSR2 sub-subfamily. In terms of tissue distribution, expressed in prostate (at protein level).

The protein localises to the cell membrane. Receptor for the tridecapeptide neurotensin. It is associated with G proteins that activate a phosphatidylinositol-calcium second messenger system. The protein is Neurotensin receptor type 2 (NTSR2) of Homo sapiens (Human).